A 119-amino-acid polypeptide reads, in one-letter code: Fluoride-specific ion channel FluC (119 aa).

Helical transmembrane passes span L37 to V54, L61 to T83, and A93 to L112. Na(+) is bound by residues G69 and T72.

The protein belongs to the fluoride channel Fluc/FEX (TC 1.A.43) family.

It localises to the cell inner membrane. It carries out the reaction fluoride(in) = fluoride(out). Na(+) is not transported, but it plays an essential structural role and its presence is essential for fluoride channel function. Fluoride-specific ion channel. Important for reducing fluoride concentration in the cell, thus reducing its toxicity. This Neisseria meningitidis serogroup C (strain 053442) protein is Fluoride-specific ion channel FluC.